The sequence spans 301 residues: Very-long-chain aldehyde decarbonylase GL1-10 (301 aa).

3 helical membrane passes run 36-56, 94-114, and 187-207; these read VLFW…PLPV, FFLV…MVGI, and SFVG…WIVL. The Fatty acid hydroxylase domain occupies 131-265; sequence LVYFLVEDYL…FTYCDYLYGT (135 aa).

This sequence belongs to the sterol desaturase family. Homodimer. In terms of tissue distribution, expressed ubiquitously.

It localises to the endoplasmic reticulum membrane. The enzyme catalyses a long-chain fatty aldehyde + 2 NADPH + O2 + H(+) = a long-chain alkane + formate + 2 NADP(+) + H2O. In terms of biological role, aldehyde decarbonylase involved in the conversion of aldehydes to alkanes. Core component of a very-long-chain alkane synthesis complex. In Oryza sativa subsp. japonica (Rice), this protein is Very-long-chain aldehyde decarbonylase GL1-10.